Consider the following 168-residue polypeptide: Large ribosomal subunit protein uL10 (168 aa).

It belongs to the universal ribosomal protein uL10 family. Part of the ribosomal stalk of the 50S ribosomal subunit. The N-terminus interacts with L11 and the large rRNA to form the base of the stalk. The C-terminus forms an elongated spine to which L12 dimers bind in a sequential fashion forming a multimeric L10(L12)X complex.

Forms part of the ribosomal stalk, playing a central role in the interaction of the ribosome with GTP-bound translation factors. The sequence is that of Large ribosomal subunit protein uL10 from Acinetobacter baumannii (strain AB307-0294).